We begin with the raw amino-acid sequence, 4513 residues long: Dynein-1-beta heavy chain, flagellar inner arm I1 complex (4513 aa).

Residues 1–1806 (MEPGDEGKGH…IVKQVLSVFY (1806 aa)) are stem. 3 coiled-coil regions span residues 192 to 223 (KAAA…NQQD), 1544 to 1577 (TAQG…RQQF), and 1704 to 1727 (THEC…LKKK). 4 AAA regions span residues 1807–2028 (YGYE…PIAR), 2089–2350 (RAIE…VPEN), 2458–2706 (FKPA…IIQG), and 2808–3059 (DYAL…LKRR). ATP is bound by residues 1845–1852 (GPAGTGKT), 2127–2134 (GRTGSGKS), 2497–2504 (GNVGVGKT), and 2848–2855 (GVGGSGRK). 3 coiled-coil regions span residues 3107–3193 (AAMK…LTKK), 3301–3384 (KRAK…SISE), and 3499–3519 (RLKV…NAIQ). Residues 3107–3384 (AAMKKVAEEK…RVRWEASISE (278 aa)) form a stalk region. AAA stretches follow at residues 3443 to 3674 (LANP…EVNA) and 3890 to 4109 (ATTY…LLKS).

In terms of assembly, the I1 inner arm complex (also known as the f dynein complex) is a two-headed isoform composed of two heavy chains (1-alpha and 1-beta), three intermediate chains and three light chains. I1 occupies a specific position proximal to the first radial spoke and repeats every 96 nm along the length of the axoneme.

The protein resides in the cell projection. It is found in the cilium. It localises to the flagellum. Its subcellular location is the cytoplasm. The protein localises to the cytoskeleton. The protein resides in the flagellum axoneme. Functionally, force generating protein of eukaryotic cilia and flagella. Produces force towards the minus ends of microtubules. Dynein has ATPase activity; the force-producing power stroke is thought to occur on release of ADP. Required for assembly of the I1 inner arm complex and its targeting to the appropriate axoneme location. Also required for phototaxis. The sequence is that of Dynein-1-beta heavy chain, flagellar inner arm I1 complex (DHC10) from Chlamydomonas reinhardtii (Chlamydomonas smithii).